A 342-amino-acid polypeptide reads, in one-letter code: S-adenosylmethionine:tRNA ribosyltransferase-isomerase (342 aa).

The protein belongs to the QueA family. Monomer.

The protein resides in the cytoplasm. It catalyses the reaction 7-aminomethyl-7-carbaguanosine(34) in tRNA + S-adenosyl-L-methionine = epoxyqueuosine(34) in tRNA + adenine + L-methionine + 2 H(+). It participates in tRNA modification; tRNA-queuosine biosynthesis. Transfers and isomerizes the ribose moiety from AdoMet to the 7-aminomethyl group of 7-deazaguanine (preQ1-tRNA) to give epoxyqueuosine (oQ-tRNA). This Bacillus subtilis (strain 168) protein is S-adenosylmethionine:tRNA ribosyltransferase-isomerase.